We begin with the raw amino-acid sequence, 90 residues long: Small ribosomal subunit protein uS15c (90 aa).

Belongs to the universal ribosomal protein uS15 family. In terms of assembly, part of the 30S ribosomal subunit.

It localises to the plastid. The protein resides in the chloroplast. In Piper cenocladum (Ant piper), this protein is Small ribosomal subunit protein uS15c (rps15).